The chain runs to 283 residues: Methylamine utilization protein MauF (283 aa).

Helical transmembrane passes span 37–57, 58–78, 116–136, 143–163, 187–207, 210–230, and 263–283; these read FALMLSAVAAGLAGGAMLHSA, MSATSALTGLFIVLALAGGFL, GYAIGAVVLGGALGMAGWLLF, YMVAGMAVLALGYGAHQFGFM, IGLLYGYALGMNYLTYVQTPI, IVTGVALFCGDVKTAIVIIGI, and VEVDGFLLLSVGSAALMLLVL.

The protein resides in the cell membrane. It participates in one-carbon metabolism; methylamine degradation. This Methylobacillus flagellatus (strain ATCC 51484 / DSM 6875 / VKM B-1610 / KT) protein is Methylamine utilization protein MauF (mauF).